We begin with the raw amino-acid sequence, 238 residues long: Probable septum site-determining protein MinC (238 aa).

This sequence belongs to the MinC family. As to quaternary structure, interacts with MinD and FtsZ.

Cell division inhibitor that blocks the formation of polar Z ring septums. Rapidly oscillates between the poles of the cell to destabilize FtsZ filaments that have formed before they mature into polar Z rings. Prevents FtsZ polymerization. This chain is Probable septum site-determining protein MinC, found in Xylella fastidiosa (strain M23).